The following is a 127-amino-acid chain: Large ribosomal subunit protein bL17 (127 aa).

This sequence belongs to the bacterial ribosomal protein bL17 family. As to quaternary structure, part of the 50S ribosomal subunit. Contacts protein L32.

The polypeptide is Large ribosomal subunit protein bL17 (Legionella pneumophila (strain Paris)).